Reading from the N-terminus, the 547-residue chain is Sodium-coupled neutral amino acid transporter 4 (547 aa).

Residues 1–26 are disordered; it reads MDPMELRNVNIEPDDESSSGESVPDS. At 1 to 104 the chain is on the extracellular side; the sequence is MDPMELRNVN…GLSYAMANTG (104 aa). Phosphoserine is present on serine 49. The helical transmembrane segment at 105–125 threads the bilayer; that stretch reads IILFIIMLLAVAILSLYSVHL. The Cytoplasmic portion of the chain corresponds to 126-151; sequence LLKTAKEGGSLIYEKLGEKAFGWPGK. Residues 152–172 traverse the membrane as a helical segment; it reads IGAFISITMQNIGAMSSYLFI. Residues 173-195 lie on the Extracellular side of the membrane; that stretch reads IKYELPEVIRAFMGLEENTGEWY. The helical transmembrane segment at 196 to 216 threads the bilayer; the sequence is PNGNYLIVFVSLGIILPLSLL. At 217 to 220 the chain is on the cytoplasmic side; sequence KNLG. A helical membrane pass occupies residues 221–241; that stretch reads YLGYTSGFSLTCMVFFVSVVI. The Extracellular portion of the chain corresponds to 242 to 332; it reads YKKFQIPCPL…PKYFVFNSRT (91 aa). Cysteine 249 and cysteine 321 are disulfide-bonded. Residues asparagine 260, asparagine 264, and asparagine 276 are each glycosylated (N-linked (GlcNAc...) asparagine). A helical transmembrane segment spans residues 333 to 353; it reads AYAIPILAFAFVCHPEVLPIY. Over 354-369 the chain is Cytoplasmic; sequence SELKDRSRRKMQTVSN. Residues 370–390 traverse the membrane as a helical segment; sequence ISITGMLVMYLLAALFGYLTF. The Extracellular segment spans residues 391 to 411; that stretch reads YGEVEDELLHAYSKVYTFDIP. A helical membrane pass occupies residues 412–432; the sequence is LLMVRLAVLVAVTLTVPIVLF. Residues 433 to 453 are Cytoplasmic-facing; it reads PIRTSVTTLLFPKRPFSWIRH. A helical membrane pass occupies residues 454 to 474; sequence FLIAAVLIALNNVLVILVPTI. Residues 475–476 are Extracellular-facing; the sequence is KY. Residues 477–497 form a helical membrane-spanning segment; sequence IFGFIGASSATMLIFILPAVF. Residues 498–514 lie on the Cytoplasmic side of the membrane; sequence YLKLVKKESFRSPQKVG. A helical transmembrane segment spans residues 515–535; that stretch reads ALIFLVVGIIFMIGSMALIII. Residues 536–547 lie on the Extracellular side of the membrane; sequence DWIYDPPNSKHH.

Belongs to the amino acid/polyamine transporter 2 family. The disulfide bond plays an important role in substrate transport, but has no effect on trafficking to the cell surface.

It localises to the cell membrane. The protein localises to the cell projection. It is found in the microvillus membrane. The catalysed reaction is L-methionine(in) + Na(+)(in) = L-methionine(out) + Na(+)(out). It catalyses the reaction L-asparagine(in) + Na(+)(in) = L-asparagine(out) + Na(+)(out). It carries out the reaction L-threonine(in) + Na(+)(in) = L-threonine(out) + Na(+)(out). The enzyme catalyses L-serine(in) + Na(+)(in) = L-serine(out) + Na(+)(out). The catalysed reaction is glycine(in) + Na(+)(in) = glycine(out) + Na(+)(out). It catalyses the reaction L-alanine(in) + Na(+)(in) = L-alanine(out) + Na(+)(out). It carries out the reaction L-glutamine(in) + Na(+)(in) = L-glutamine(out) + Na(+)(out). The enzyme catalyses L-histidine(in) + Na(+)(in) = L-histidine(out) + Na(+)(out). The catalysed reaction is L-cysteine(in) + Na(+)(in) = L-cysteine(out) + Na(+)(out). It catalyses the reaction L-proline(in) + Na(+)(in) = L-proline(out) + Na(+)(out). Symporter that cotransports neutral amino acids and sodium ions from the extraccellular to the intracellular side of the cell membrane. The transport is electrogenic, pH dependent and partially tolerates substitution of Na(+) by Li(+). Preferentially transports smaller amino acids, such as glycine, L-alanine, L-serine, L-asparagine and L-threonine, followed by L-cysteine, L-histidine, L-proline and L-glutamine and L-methionine. In Pongo abelii (Sumatran orangutan), this protein is Sodium-coupled neutral amino acid transporter 4.